A 241-amino-acid polypeptide reads, in one-letter code: Ribosome-inactivating protein luffaculin 1 (241 aa).

N-linked (GlcNAc...) asparagine glycosylation is found at Asn28, Asn33, Asn77, and Asn84. Glu159 is an active-site residue. Asn205 carries an N-linked (GlcNAc...) asparagine glycan.

This sequence belongs to the ribosome-inactivating protein family. Type 1 RIP subfamily.

It carries out the reaction Endohydrolysis of the N-glycosidic bond at one specific adenosine on the 28S rRNA.. In Luffa acutangula (Ridged gourd), this protein is Ribosome-inactivating protein luffaculin 1.